A 510-amino-acid chain; its full sequence is UDP-N-acetylmuramyl-tripeptide synthetase (510 aa).

Serine 36 is a binding site for UDP-N-acetyl-alpha-D-muramoyl-L-alanyl-D-glutamate. Position 113-119 (113-119 (GTKGKTT)) interacts with ATP. Residues 159–160 (TT), serine 186, and arginine 194 each bind UDP-N-acetyl-alpha-D-muramoyl-L-alanyl-D-glutamate. Lysine 228 bears the N6-carboxylysine mark.

The protein belongs to the MurCDEF family. MurE subfamily. Post-translationally, carboxylation is probably crucial for Mg(2+) binding and, consequently, for the gamma-phosphate positioning of ATP.

It is found in the cytoplasm. It functions in the pathway cell wall biogenesis; peptidoglycan biosynthesis. Functionally, catalyzes the addition of an amino acid to the nucleotide precursor UDP-N-acetylmuramoyl-L-alanyl-D-glutamate (UMAG) in the biosynthesis of bacterial cell-wall peptidoglycan. The protein is UDP-N-acetylmuramyl-tripeptide synthetase of Ligilactobacillus salivarius (strain UCC118) (Lactobacillus salivarius).